Reading from the N-terminus, the 483-residue chain is CBL-interacting serine/threonine-protein kinase 19 (483 aa).

One can recognise a Protein kinase domain in the interval 28–282 (YEMGRLLGHG…MPDIMETSWF (255 aa)). Residues 34 to 42 (LGHGTFAKV) and Lys57 each bind ATP. Asp150 (proton acceptor) is an active-site residue. The activation loop stretch occupies residues 168–197 (DFGLSAVSDQIRQDGLFHTFCGTPAYVAPE). Phosphoserine is present on Ser172. Residue Thr186 is modified to Phosphothreonine. Positions 313 to 322 (SVSGRSSTVS) are enriched in polar residues. Positions 313–338 (SVSGRSSTVSEPEDFESFDGRRRGGS) are disordered. The NAF domain occupies 340–364 (PRPASLNAFDLISFSPGFDLSGLFE). The interval 367 to 396 (GEGSRFVSGAPVGQIISKLEEIARIVSFTV) is PPI. Residues 459-483 (NLSSENGQRVSGSRSLPSFLLSDTD) form a disordered region.

This sequence belongs to the protein kinase superfamily. CAMK Ser/Thr protein kinase family. SNF1 subfamily. The cofactor is Mn(2+).

The enzyme catalyses L-seryl-[protein] + ATP = O-phospho-L-seryl-[protein] + ADP + H(+). The catalysed reaction is L-threonyl-[protein] + ATP = O-phospho-L-threonyl-[protein] + ADP + H(+). CIPK serine-threonine protein kinases interact with CBL proteins. Binding of a CBL protein to the regulatory NAF domain of CIPK protein lead to the activation of the kinase in a calcium-dependent manner. The chain is CBL-interacting serine/threonine-protein kinase 19 (CIPK19) from Arabidopsis thaliana (Mouse-ear cress).